A 340-amino-acid polypeptide reads, in one-letter code: Cell invasion protein SipD (340 aa).

2 disordered regions span residues 1-26 (MLNI…PSAS) and 57-76 (QAQQ…NDER). A coiled-coil region spans residues 291 to 319 (FKAQEENLKTTLQTLTQKYSNANSLYDNL).

This sequence belongs to the invasin protein D family.

It is found in the secreted. Functionally, required for translocation of effector proteins via the type III secretion system SPI-1, which is essential for an efficient bacterial internalization. Probably acts by modulating the secretion of SipA, SipB, and SipC. The protein is Cell invasion protein SipD (sipD) of Salmonella typhi.